The primary structure comprises 202 residues: IMP cyclohydrolase (202 aa).

This sequence belongs to the archaeal IMP cyclohydrolase family.

The catalysed reaction is IMP + H2O = 5-formamido-1-(5-phospho-D-ribosyl)imidazole-4-carboxamide. It participates in purine metabolism; IMP biosynthesis via de novo pathway; IMP from 5-formamido-1-(5-phospho-D-ribosyl)imidazole-4-carboxamide: step 1/1. Catalyzes the cyclization of 5-formylamidoimidazole-4-carboxamide ribonucleotide to IMP. This Methanosphaera stadtmanae (strain ATCC 43021 / DSM 3091 / JCM 11832 / MCB-3) protein is IMP cyclohydrolase.